A 247-amino-acid chain; its full sequence is MWRTKTLESMLCSPMKCSSSNIGGSYAQSSKEVSNTTKREVHLPPCSSIMHAPLTPEINQAALPPPAYHYAPSSLHQTEDPVWRSSPNSIIFSPVIATPQPFPLTFVERQSCCPIYSTAASSYTAQSVPPSMQHFQEENHRAVSNEQYSLPNVHIGQNPGTLLSQTQTDLDLIQKQLRAVVKLRKQCPICGKVCSRPSTLRTHYLIHTGDTPFKCTWEHCNKSFNVKSNMLRHLRTHQKKIAKKKHQ.

2 consecutive C2H2-type zinc fingers follow at residues 185–207 (KQCP…YLIH) and 213–237 (FKCT…LRTH).

The polypeptide is Zinc finger protein YPR015C (Saccharomyces cerevisiae (strain ATCC 204508 / S288c) (Baker's yeast)).